A 68-amino-acid polypeptide reads, in one-letter code: Large ribosomal subunit protein bL32 (68 aa).

It belongs to the bacterial ribosomal protein bL32 family.

The sequence is that of Large ribosomal subunit protein bL32 from Aster yellows witches'-broom phytoplasma (strain AYWB).